Consider the following 593-residue polypeptide: MRKFTLLMLLLIVISMSGIAGAAEVKNLNTSKTFTKIQEAIDDPSTTDGNIIIVGPGNYTENILVNKSLTLKSNGSAIINAVSSEKSTITIKANNVWIEGFIIIGGKNGIYMENVTGCTITNNTIQNAFVSGWEYYGGNGICLVNSTNNTITNNIIRNNTWNGINVCESKGNIIKNNTIMYSGGIGIYVWGFNKFEGNNIIENNRIINATYGGIYLFRPSNNKICRNYIANVSSGGGGMSGAICIDVSDYNIVKDNIGINCDGGLFTDGMIGNEITNNIFKNCKVAVSESTYGPASRNNKIYGNYFINYETAISDPKGELVDNIWNTTEGGNYWSNYTGNNTGDGTGNIPYYYDNKPLVVDLAIEDIAAKPSGIEVRVKNLGKADIKKIDPLTKLKIKISCDNDVYETFIDPLSAGESQIVRWDKIVPEGNHTIKAEIPYSAEGYLIGTNIRDADISNNVFSKIVQGFVQNKTFTITLTNLGKSTITIKYYISIYTNPVNGTKVSYRELTITLKPNETKTIELGKYPFKYAVSGTMIVKNPSRYRIPLNLRIKYEIEGLNPQMREISKYIAPRGEFRYIARYTGKEEGYADVW.

Positions 1-22 (MRKFTLLMLLLIVISMSGIAGA) are cleaved as a signal peptide. Asn-29, Asn-58, Asn-66, Asn-74, Asn-114, Asn-122, Asn-145, Asn-148, Asn-158, Asn-176, Asn-208, Asn-231, Asn-326, Asn-336, Asn-340, Asn-431, Asn-471, Asn-500, and Asn-516 each carry an N-linked (GalNAc...) asparagine glycan.

Post-translationally, N-glycosylated; contains glycans composed of methyl-Man, Man and GalNAc residues in a molar ratio of 2:3:1.

It is found in the secreted. It localises to the cell wall. The protein resides in the S-layer. Functionally, the S-layer is a paracrystalline mono-layered assembly of proteins which coat the surface of the cell. The polypeptide is Cell surface glycoprotein (slgA) (Methanothermus fervidus (strain ATCC 43054 / DSM 2088 / JCM 10308 / V24 S)).